The primary structure comprises 239 residues: tRNA (guanine-N(1)-)-methyltransferase (239 aa).

S-adenosyl-L-methionine contacts are provided by residues glycine 110 and 130–135; that span reads VGDYVL.

Belongs to the RNA methyltransferase TrmD family. As to quaternary structure, homodimer.

Its subcellular location is the cytoplasm. It carries out the reaction guanosine(37) in tRNA + S-adenosyl-L-methionine = N(1)-methylguanosine(37) in tRNA + S-adenosyl-L-homocysteine + H(+). Specifically methylates guanosine-37 in various tRNAs. The protein is tRNA (guanine-N(1)-)-methyltransferase of Borrelia turicatae (strain 91E135).